Reading from the N-terminus, the 822-residue chain is Molybdenum cofactor sulfurase (822 aa).

An N6-(pyridoxal phosphate)lysine modification is found at Lys-239. Cys-401 is an active-site residue. Residues 633-666 form a disordered region; that stretch reads TRISNPTRSSRRSQRALMPGSFPEDPSPTSEQPP. The MOSC domain occupies 643–820; it reads RRSQRALMPG…VMVGDVVTPQ (178 aa).

It belongs to the class-V pyridoxal-phosphate-dependent aminotransferase family. MOCOS subfamily. It depends on pyridoxal 5'-phosphate as a cofactor.

It carries out the reaction Mo-molybdopterin + L-cysteine + AH2 = thio-Mo-molybdopterin + L-alanine + A + H2O. It functions in the pathway cofactor biosynthesis; molybdopterin biosynthesis. In terms of biological role, sulfurates the molybdenum cofactor. Sulfation of molybdenum is essential for xanthine dehydrogenase (XDH) and aldehyde oxidase (ADO) enzymes in which molybdenum cofactor is liganded by 1 oxygen and 1 sulfur atom in active form. This Aspergillus oryzae (strain ATCC 42149 / RIB 40) (Yellow koji mold) protein is Molybdenum cofactor sulfurase.